Consider the following 325-residue polypeptide: Reaction center protein M chain (325 aa).

Transmembrane regions (helical) follow at residues 53–79 (LGFT…LASV), 111–140 (EGGW…AEAL), and 143–168 (SQHL…PVMM). The (7R,8Z)-bacteriochlorophyll b site is built by His182 and His202. Residues 198 to 226 (YNPFHMLSIAFLYGSALLFAMHGATILAV) form a helical membrane-spanning segment. Fe cation contacts are provided by His219 and Glu234. Trp252 provides a ligand contact to a ubiquinone. His266 lines the Fe cation pocket.

It belongs to the reaction center PufL/M/PsbA/D family. Reaction center is composed of four bacteriochlorophylls, two bacteriopheophytins, two ubiquinones, one iron, and two highly hydrophobic polypeptide chains (designated L and M).

The protein resides in the cellular chromatophore membrane. Functionally, the reaction center is a membrane-bound complex that mediates the initial photochemical event in the electron transfer process of photosynthesis. The protein is Reaction center protein M chain (pufM) of Allochromatium vinosum (strain ATCC 17899 / DSM 180 / NBRC 103801 / NCIMB 10441 / D) (Chromatium vinosum).